The primary structure comprises 426 residues: Histidine--tRNA ligase (426 aa).

It belongs to the class-II aminoacyl-tRNA synthetase family. Homodimer.

It is found in the cytoplasm. The enzyme catalyses tRNA(His) + L-histidine + ATP = L-histidyl-tRNA(His) + AMP + diphosphate + H(+). This Streptococcus sanguinis (strain SK36) protein is Histidine--tRNA ligase.